The sequence spans 94 residues: Ribonuclease P protein component 1 (94 aa).

The protein belongs to the eukaryotic/archaeal RNase P protein component 1 family. As to quaternary structure, consists of a catalytic RNA component and at least 4-5 protein subunits.

Its subcellular location is the cytoplasm. The enzyme catalyses Endonucleolytic cleavage of RNA, removing 5'-extranucleotides from tRNA precursor.. In terms of biological role, part of ribonuclease P, a protein complex that generates mature tRNA molecules by cleaving their 5'-ends. This Haloarcula marismortui (strain ATCC 43049 / DSM 3752 / JCM 8966 / VKM B-1809) (Halobacterium marismortui) protein is Ribonuclease P protein component 1.